The chain runs to 285 residues: Protein phosphatase 1 regulatory subunit 3B (285 aa).

The PP1-binding motif motif lies at 62-65; that stretch reads RVSF. The CBM21 domain maps to 125–233; the sequence is RNRLQADHVC…SNRGKNYRII (109 aa). Residue Ser261 is modified to Phosphoserine.

Interacts with glycogen, PPP1CC catalytic subunit of PP1 and PYGL. Associates with glycogen particles. Forms complexes with debranching enzyme, glycogen phosphorylase, glycogen synthase and phosphorylase kinase which is necessary for its regulation of PP1 activity. In terms of tissue distribution, highly expressed in the liver and, at lower levels, in skeletal muscle, including in vastus lateralis, gastrocnemius and soleus (at protein level). Highest mRNA levels are observed in skeletal muscle, and only moderate levels in liver and heart. Weak expression in placenta and lung.

In terms of biological role, acts as a glycogen-targeting subunit for phosphatase PP1. Facilitates interaction of the PP1 with enzymes of the glycogen metabolism and regulates its activity. Suppresses the rate at which PP1 dephosphorylates (inactivates) glycogen phosphorylase and enhances the rate at which it activates glycogen synthase and therefore limits glycogen breakdown. Its activity is inhibited by PYGL, resulting in inhibition of the glycogen synthase and glycogen phosphorylase phosphatase activities of PP1. Dramatically increases basal and insulin-stimulated glycogen synthesis upon overexpression in hepatocytes. The protein is Protein phosphatase 1 regulatory subunit 3B (PPP1R3B) of Homo sapiens (Human).